A 93-amino-acid chain; its full sequence is U11-ctenitoxin-Pn1a (93 aa).

Positions 1 to 21 (MKCAVLFLSVIALVHIFVVEA) are cleaved as a signal peptide. Residues 22–34 (EEEPDSDALVPQE) constitute a propeptide that is removed on maturation. 5 disulfides stabilise this stretch: cysteine 37–cysteine 51, cysteine 44–cysteine 57, cysteine 50–cysteine 75, cysteine 59–cysteine 73, and cysteine 83–cysteine 90.

It belongs to the neurotoxin 09 (Tx3-6) family. Expressed by the venom gland.

Its subcellular location is the secreted. Functionally, probable neurotoxin. The protein is U11-ctenitoxin-Pn1a of Phoneutria nigriventer (Brazilian armed spider).